The sequence spans 581 residues: MVISVPLFSSVLLALVVAVPADFDVGGRLLGVGLCSVRGDPNEHYDPHGDLYLRPFLQLDSVHQFYSLVFARKASSAMGASTSTKRPLTSKVTNEGENDRVKYASSAMQGLRMSMQDALAVELDLDALKSTSFFGVYDGHGGAEVAMYCAKRFHVMLREEESFLNNLSYAITSVCSRLDDELEAPNVWRASLYPHRSSESSSESSDCFQFLSTGSCANVWRSSEAVSYKLPSYEGSTACVVIIRGNQITVGNVGDSRCVLSKNGQAIDLSTDHKPNVPLERQRILRVGGQVWREKFPAKDSGGEIREQWGPYCIEGKLSTSRALAGIFLTTISGDFAYKNIVYRPQYQMVTHFPDIRVAKITGDTEFLVIASDGICSIQILIVDLNTFFPFRDHMSSQDVVDFVHEKLNSRRQELCQSLINQGKKRECFTEDSQLATNKNIAPNTTTLGEETLHTTCEKLVENCLESRNNATAILVQFKPGADQPIPALPNIQEGSDEVAGGADQPIPVLPNIQQVSDEVAGGTGQPIPVLPDIQEGSDEVAGGAAVAEQHQHNPEGGGEQQLDLDDALDGEALALLFGQP.

The signal sequence occupies residues 1 to 21; that stretch reads MVISVPLFSSVLLALVVAVPA. Residues 102–478 form the PPM-type phosphatase domain; that stretch reads KYASSAMQGL…NNATAILVQF (377 aa). Positions 138, 139, 373, and 469 each coordinate Mn(2+). Residues 538–563 are disordered; that stretch reads SDEVAGGAAVAEQHQHNPEGGGEQQL.

This sequence belongs to the PP2C family. It depends on Mg(2+) as a cofactor. Mn(2+) is required as a cofactor.

It catalyses the reaction O-phospho-L-seryl-[protein] + H2O = L-seryl-[protein] + phosphate. It carries out the reaction O-phospho-L-threonyl-[protein] + H2O = L-threonyl-[protein] + phosphate. The protein is Putative protein phosphatase 2C 22 of Oryza sativa subsp. japonica (Rice).